The primary structure comprises 216 residues: DNA gyrase subunit B (216 aa).

The Toprim domain maps to 140–216 (SELYLVEGDS…PDKLRYHKII (77 aa)).

This sequence belongs to the type II topoisomerase GyrB family. As to quaternary structure, heterotetramer, composed of two GyrA and two GyrB chains. In the heterotetramer, GyrA contains the active site tyrosine that forms a transient covalent intermediate with DNA, while GyrB binds cofactors and catalyzes ATP hydrolysis.

The protein resides in the cytoplasm. The catalysed reaction is ATP-dependent breakage, passage and rejoining of double-stranded DNA.. Functionally, a type II topoisomerase that negatively supercoils closed circular double-stranded (ds) DNA in an ATP-dependent manner to modulate DNA topology and maintain chromosomes in an underwound state. Negative supercoiling favors strand separation, and DNA replication, transcription, recombination and repair, all of which involve strand separation. Also able to catalyze the interconversion of other topological isomers of dsDNA rings, including catenanes and knotted rings. Type II topoisomerases break and join 2 DNA strands simultaneously in an ATP-dependent manner. This is DNA gyrase subunit B (gyrB) from Acinetobacter venetianus (strain ATCC 31012 / DSM 23050 / BCRC 14357 / CCUG 45561 / CIP 110063 / KCTC 2702 / LMG 19082 / RAG-1).